The sequence spans 502 residues: Xylan O-acetyltransferase 13 (502 aa).

The Cytoplasmic segment spans residues methionine 1–proline 53. The chain crosses the membrane as a helical; Signal-anchor for type II membrane protein span at residues leucine 54 to leucine 76. Residues phenylalanine 77–lysine 502 are Lumenal-facing. 4 cysteine pairs are disulfide-bonded: cysteine 152/cysteine 203, cysteine 174/cysteine 239, cysteine 183/cysteine 483, and cysteine 399/cysteine 479. N-linked (GlcNAc...) asparagine glycans are attached at residues asparagine 153, asparagine 163, asparagine 189, and asparagine 209. Residues glycine 226–serine 228 carry the GDS motif motif. Serine 228 functions as the Nucleophile in the catalytic mechanism. 5 N-linked (GlcNAc...) asparagine glycosylation sites follow: asparagine 255, asparagine 267, asparagine 372, asparagine 401, and asparagine 442. The active-site Proton donor is aspartate 478. Residues aspartate 478–histidine 481 carry the DXXH motif motif. Histidine 481 acts as the Proton acceptor in catalysis.

It belongs to the PC-esterase family. TBL subfamily.

Its subcellular location is the golgi apparatus membrane. Its function is as follows. Xylan acetyltransferase required for 2-O- and 3-O-monoacetylation of xylosyl residues in xylan. Catalyzes the 2-O-acetylation of xylan, followed by nonenzymatic acetyl migration to the O-3 position, resulting in products that are monoacetylated at both O-2 and O-3 positions. The chain is Xylan O-acetyltransferase 13 from Oryza sativa subsp. japonica (Rice).